We begin with the raw amino-acid sequence, 896 residues long: Bifunctional glutamine synthetase adenylyltransferase/adenylyl-removing enzyme (896 aa).

The adenylyl removase stretch occupies residues 1-411; that stretch reads MSDNRLDTAR…LFNEILSEPE (411 aa). The adenylyl transferase stretch occupies residues 417-896; it reads NSEWQWAWQD…EVFGEEAATV (480 aa).

It belongs to the GlnE family. The cofactor is Mg(2+).

It carries out the reaction [glutamine synthetase]-O(4)-(5'-adenylyl)-L-tyrosine + phosphate = [glutamine synthetase]-L-tyrosine + ADP. The enzyme catalyses [glutamine synthetase]-L-tyrosine + ATP = [glutamine synthetase]-O(4)-(5'-adenylyl)-L-tyrosine + diphosphate. Functionally, involved in the regulation of glutamine synthetase GlnA, a key enzyme in the process to assimilate ammonia. When cellular nitrogen levels are high, the C-terminal adenylyl transferase (AT) inactivates GlnA by covalent transfer of an adenylyl group from ATP to specific tyrosine residue of GlnA, thus reducing its activity. Conversely, when nitrogen levels are low, the N-terminal adenylyl removase (AR) activates GlnA by removing the adenylyl group by phosphorolysis, increasing its activity. The regulatory region of GlnE binds the signal transduction protein PII (GlnB) which indicates the nitrogen status of the cell. The polypeptide is Bifunctional glutamine synthetase adenylyltransferase/adenylyl-removing enzyme (Neisseria meningitidis serogroup B (strain ATCC BAA-335 / MC58)).